The chain runs to 206 residues: Adenylyl-sulfate kinase (206 aa).

Residue 36 to 43 (GLSGSGKS) participates in ATP binding. Catalysis depends on Ser-110, which acts as the Phosphoserine intermediate.

This sequence belongs to the APS kinase family.

The catalysed reaction is adenosine 5'-phosphosulfate + ATP = 3'-phosphoadenylyl sulfate + ADP + H(+). Its pathway is sulfur metabolism; hydrogen sulfide biosynthesis; sulfite from sulfate: step 2/3. Catalyzes the synthesis of activated sulfate. The sequence is that of Adenylyl-sulfate kinase (cysC) from Buchnera aphidicola subsp. Acyrthosiphon pisum (strain APS) (Acyrthosiphon pisum symbiotic bacterium).